The primary structure comprises 360 residues: 1-aminocyclopropane-1-carboxylate oxidase homolog 6 (360 aa).

One can recognise a Fe2OG dioxygenase domain in the interval 208 to 309; the sequence is KGLLLLCHYY…ISVASFFSTS (102 aa). Fe cation is bound by residues H232, D234, and H288. Position 299 (R299) interacts with 2-oxoglutarate.

It belongs to the iron/ascorbate-dependent oxidoreductase family. The cofactor is Fe(2+). Constitutively expressed in leaves and blades.

This is 1-aminocyclopropane-1-carboxylate oxidase homolog 6 from Arabidopsis thaliana (Mouse-ear cress).